We begin with the raw amino-acid sequence, 269 residues long: Pertussis toxin subunit 1 (269 aa).

The signal sequence occupies residues 1–34 (MRCTRAIRQTARTGWLTWLAILAVTAPVTSPAWA). NAD(+) is bound at residue tryptophan 60. Residues histidine 69 and glutamate 163 contribute to the active site. A disulfide bridge links cysteine 75 with cysteine 235.

This sequence belongs to the bacterial exotoxin subunit A family. Pertussis toxin contains five different chains, S1-S5. They are organized into 2 functional subunits: A, composed of S1 (which is toxic) and B, containing S2, S3, S5, and two copies of S4 (B binds to the membrane receptors). Dimers of S2-S4 and S3-S4 are held together by S5.

Its subcellular location is the secreted. S1 is an NAD-dependent ADP-ribosyltransferase, which plays a crucial role in the pathogenesis of B.pertussis causing disruption of normal host cellular regulation. It catalyzes the ADP-ribosylation of a cysteine in the alpha subunit of host heterotrimeric G proteins. In the absence of G proteins it also catalyzes the cleavage of NAD(+) into ADP-ribose and nicotinamide. It irreversibly uncouples the G-alpha GTP-binding proteins from their membrane receptors. This is Pertussis toxin subunit 1 (ptxA) from Bordetella pertussis (strain Tohama I / ATCC BAA-589 / NCTC 13251).